Consider the following 178-residue polypeptide: Translation initiation factor IF-3 (178 aa).

The segment at 1–20 (MRRPFKTDAPVKDGPRSNRE) is disordered.

Belongs to the IF-3 family. Monomer.

The protein resides in the cytoplasm. Its function is as follows. IF-3 binds to the 30S ribosomal subunit and shifts the equilibrium between 70S ribosomes and their 50S and 30S subunits in favor of the free subunits, thus enhancing the availability of 30S subunits on which protein synthesis initiation begins. The polypeptide is Translation initiation factor IF-3 (Rhizobium leguminosarum bv. trifolii (strain WSM2304)).